We begin with the raw amino-acid sequence, 184 residues long: Protein YrdA (184 aa).

This sequence belongs to the gamma-class carbonic anhydrase family.

The protein is Protein YrdA (yrdA) of Escherichia coli (strain K12).